Reading from the N-terminus, the 29-residue chain is Cycloviolacin-O15 (29 aa).

A cross-link (cyclopeptide (Gly-Asn)) is located at residues 1–29 (GLVPCGETCFTGKCYTPGCSCSYPICKKN). Disulfide bonds link C5/C19, C9/C21, and C14/C26.

This is a cyclic peptide.

Its function is as follows. Probably participates in a plant defense mechanism. Has hemolytic activity. The polypeptide is Cycloviolacin-O15 (Viola odorata (Sweet violet)).